We begin with the raw amino-acid sequence, 91 residues long: MGDFNLVGVIRVMPTDPEVNLDELEEKLKALIPEKYGLAKVEREPIAFGLVALKFYVLGRDEEGYSFDEIAEKFQEVEEVESAEVETVSRI.

It belongs to the EF-1-beta/EF-1-delta family.

Its function is as follows. Promotes the exchange of GDP for GTP in EF-1-alpha/GDP, thus allowing the regeneration of EF-1-alpha/GTP that could then be used to form the ternary complex EF-1-alpha/GTP/AAtRNA. The sequence is that of Elongation factor 1-beta from Pyrococcus furiosus (strain ATCC 43587 / DSM 3638 / JCM 8422 / Vc1).